We begin with the raw amino-acid sequence, 924 residues long: Phosphatidate phosphatase LPIN1 (924 aa).

Positions 1 to 108 (MNYVGQLAGQ…IPMYLATSPI (108 aa)) are N-LIP. 2 positions are modified to phosphoserine: Ser-106 and Ser-150. Disordered regions lie at residues 133–248 (PTTA…DCQR) and 269–297 (FHASESPSGSRPSTPKSDSELVSKSADRL). Residues 152 to 161 (GKKRRKRRRK) show a composition bias toward basic residues. The short motif at 153–158 (KKRRKR) is the Nuclear localization signal element. Residues 162–172 (AQLDNLKRDDN) are compositionally biased toward basic and acidic residues. A compositionally biased stretch (acidic residues) spans 176–193 (SEDEDMFPIEMSSDEDTA). Composition is skewed to polar residues over residues 218-229 (PSISTHPQSASY) and 273-284 (ESPSGSRPSTPK). Ser-285, Ser-287, and Ser-293 each carry phosphoserine. The span at 285 to 297 (SDSELVSKSADRL) shows a compositional bias: basic and acidic residues. Thr-298 carries the post-translational modification Phosphothreonine. Disordered stretches follow at residues 314-426 (QAAK…SRHL) and 446-490 (LYFP…STSD). Ser-328 carries the phosphoserine modification. Over residues 343–358 (AIHSESSDTFSDQSPT) the composition is skewed to polar residues. Ser-392 is subject to Phosphoserine. Positions 404-413 (NTAQSSSKTD) are enriched in polar residues. Lys-459 is subject to N6-acetyllysine. The span at 461-476 (ASDNGARSANQSPQSV) shows a compositional bias: polar residues. 3 positions are modified to phosphoserine: Ser-468, Ser-472, and Ser-483. Glycyl lysine isopeptide (Lys-Gly) (interchain with G-Cter in SUMO) cross-links involve residues Lys-599 and Lys-629. The interval 627–649 (RIKHESSSSDEEHAAAKPSGSSH) is disordered. Residues 628–641 (IKHESSSSDEEHAA) are compositionally biased toward basic and acidic residues. Lys-629 is modified (N6-acetyllysine). A phosphoserine mark is found at Ser-634 and Ser-635. The tract at residues 658 to 864 (YKKTLRLTSE…VNPKGELVQE (207 aa)) is C-LIP. A DXDXT motif motif is present at residues 712-716 (DIDGT). An LXXIL motif motif is present at residues 723 to 727 (LGHIL). A phosphoserine mark is found at Ser-921 and Ser-923.

The protein belongs to the lipin family. Interacts (via LXXIL motif) with PPARA. Interacts with PPARGC1A. Interaction with PPARA and PPARGC1A leads to the formation of a complex that modulates gene transcription. Interacts with MEF2C. Mg(2+) serves as cofactor. In terms of processing, phosphorylated at multiple sites in response to insulin. Phosphorylation is controlled by the mTOR signaling pathway. Phosphorylation is decreased by epinephrine. Phosphorylation may not directly affect the catalytic activity but may regulate the localization. Dephosphorylated by the CTDNEP1-CNEP1R1 complex. Post-translationally, phosphorylated at multiple sites by mTOR in response to insulin, leading to its inactivation. Phosphorylation does not affect the catalytic activity but regulates the localization. Phosphorylation is decreased by epinephrine. Dephosphorylated by the CTDNEP1-CNEP1R1 complex. Dephosphorylation following mTOR inhibition promotes its activity. Sumoylation is important in brain and is marginal in other tissues. Sumoylation facilitates nuclear localization of isoform 2 in neuronals cells and its transcriptional coactivator activity. In terms of processing, acetylation at Lys-459 and Lys-629 by KAT5 in response to fatty acids promotes translocation to the endoplasmic reticulum and synthesis of diacylglycerol. Specifically expressed in skeletal muscle. Also expressed prominently in adipose tissue, and testis. Lower expression also detected in kidney, lung, brain and liver. As to expression, predominant isoform in the liver. In terms of tissue distribution, predominant isoform in the brain.

The protein resides in the mitochondrion outer membrane. It is found in the cytoplasm. It localises to the nucleus membrane. Its subcellular location is the nucleus. The protein localises to the endoplasmic reticulum membrane. It carries out the reaction a 1,2-diacyl-sn-glycero-3-phosphate + H2O = a 1,2-diacyl-sn-glycerol + phosphate. The catalysed reaction is 1-octadecanoyl-2-(4Z,7Z,10Z,13Z,16Z,19Z-docosahexaenoyl)-sn-glycero-3-phosphate + H2O = 1-octadecanoyl-2-(4Z,7Z,10Z,13Z,16Z,19Z-docosahexaenoyl)-sn-glycerol + phosphate. It catalyses the reaction 1-octadecanoyl-2-(5Z,8Z,11Z,14Z-eicosatetraenoyl)-sn-glycero-3-phosphate + H2O = 1-octadecanoyl-2-(5Z,8Z,11Z,14Z-eicosatetraenoyl)-sn-glycerol + phosphate. The enzyme catalyses 1-octadecanoyl-2-(9Z,12Z-octadecadienoyl)-sn-glycero-3-phosphate + H2O = 1-octadecanoyl-2-(9Z,12Z)-octadecadienoyl-sn-glycerol + phosphate. It carries out the reaction 1-octadecanoyl-2-(9Z-octadecenoyl)-sn-glycero-3-phosphate + H2O = 1-octadecanoyl-2-(9Z-octadecenoyl)-sn-glycerol + phosphate. The catalysed reaction is 1-hexadecanoyl-2-(4Z,7Z,10Z,13Z,16Z,19Z-docosahexaenoyl)-sn-glycero-3-phosphate + H2O = 1-hexadecanoyl-2-(4Z,7Z,10Z,13Z,16Z,19Z-docosahexaenoyl)-sn-glycerol + phosphate. It catalyses the reaction 1,2-dioctadecanoyl-sn-glycero-3-phosphate + H2O = 1,2-dioctadecanoyl-sn-glycerol + phosphate. The enzyme catalyses 1-hexadecanoyl-2-(5Z,8Z,11Z,14Z-eicosatetraenoyl)-sn-glycero-3-phosphate + H2O = 1-hexadecanoyl-2-(5Z,8Z,11Z,14Z-eicosatetraenoyl)-sn-glycerol + phosphate. It carries out the reaction 1-hexadecanoyl-2-(9Z,12Z-octadecadienoyl)-sn-glycero-3-phosphate + H2O = 1-hexadecanoyl-2-(9Z,12Z-octadecadienoyl)-sn-glycerol + phosphate. The catalysed reaction is 1-hexadecanoyl-2-(9Z-octadecenoyl)-sn-glycero-3-phosphate + H2O = 1-hexadecanoyl-2-(9Z-octadecenoyl)-sn-glycerol + phosphate. It catalyses the reaction 1,2-di-(4Z,7Z,10Z,13Z,16Z,19Z-docosahexaenoyl)-sn-glycero-3-phosphate + H2O = 1,2-di-(4Z,7Z,10Z,13Z,16Z,19Z-docosahexaenoyl)-sn-glycerol + phosphate. The enzyme catalyses 1,2-di-(5Z,8Z,11Z,14Z)-eicosatetraenoyl-sn-glycero-3-phosphate + H2O = 1,2-di-(5Z,8Z,11Z,14Z)-eicosatetraenoyl-sn-glycerol + phosphate. It carries out the reaction 1,2-di-(9Z,12Z-octadecadienoyl)-sn-glycero-3-phosphate + H2O = 1,2-di-(9Z,12Z-octadecadienoyl)-sn-glycerol + phosphate. The catalysed reaction is 1,2-di-(9Z-octadecenoyl)-sn-glycero-3-phosphate + H2O = 1,2-di-(9Z-octadecenoyl)-sn-glycerol + phosphate. It catalyses the reaction 1,2-dihexadecanoyl-sn-glycero-3-phosphate + H2O = 1,2-dihexadecanoyl-sn-glycerol + phosphate. Its activity is regulated as follows. Inhibited by N-ethylmaleimide treatment. In terms of biological role, acts as a magnesium-dependent phosphatidate phosphatase enzyme which catalyzes the conversion of phosphatidic acid to diacylglycerol during triglyceride, phosphatidylcholine and phosphatidylethanolamine biosynthesis and therefore controls the metabolism of fatty acids at different levels. Is involved in adipocyte differentiation. Also acts as nuclear transcriptional coactivator for PPARGC1A/PPARA regulatory pathway to modulate lipid metabolism gene expression. Its function is as follows. Recruited at the mitochondrion outer membrane and is involved in mitochondrial fission by converting phosphatidic acid to diacylglycerol. This is Phosphatidate phosphatase LPIN1 (Lpin1) from Mus musculus (Mouse).